Reading from the N-terminus, the 432-residue chain is Serine hydroxymethyltransferase (432 aa).

Residues leucine 127 and 131–133 contribute to the (6S)-5,6,7,8-tetrahydrofolate site; that span reads GHL. Lysine 236 is subject to N6-(pyridoxal phosphate)lysine.

The protein belongs to the SHMT family. Homodimer. Requires pyridoxal 5'-phosphate as cofactor.

Its subcellular location is the cytoplasm. It catalyses the reaction (6R)-5,10-methylene-5,6,7,8-tetrahydrofolate + glycine + H2O = (6S)-5,6,7,8-tetrahydrofolate + L-serine. It participates in one-carbon metabolism; tetrahydrofolate interconversion. The protein operates within amino-acid biosynthesis; glycine biosynthesis; glycine from L-serine: step 1/1. Functionally, catalyzes the reversible interconversion of serine and glycine with tetrahydrofolate (THF) serving as the one-carbon carrier. This reaction serves as the major source of one-carbon groups required for the biosynthesis of purines, thymidylate, methionine, and other important biomolecules. Also exhibits THF-independent aldolase activity toward beta-hydroxyamino acids, producing glycine and aldehydes, via a retro-aldol mechanism. This chain is Serine hydroxymethyltransferase, found in Rhizobium johnstonii (strain DSM 114642 / LMG 32736 / 3841) (Rhizobium leguminosarum bv. viciae).